The following is a 545-amino-acid chain: Glucose-6-phosphate isomerase (545 aa).

The active-site Proton donor is the glutamate 351. Residues histidine 382 and lysine 510 contribute to the active site.

This sequence belongs to the GPI family.

It is found in the cytoplasm. It catalyses the reaction alpha-D-glucose 6-phosphate = beta-D-fructose 6-phosphate. It participates in carbohydrate biosynthesis; gluconeogenesis. The protein operates within carbohydrate degradation; glycolysis; D-glyceraldehyde 3-phosphate and glycerone phosphate from D-glucose: step 2/4. Functionally, catalyzes the reversible isomerization of glucose-6-phosphate to fructose-6-phosphate. This chain is Glucose-6-phosphate isomerase, found in Shewanella baltica (strain OS223).